Reading from the N-terminus, the 428-residue chain is Glutamate-1-semialdehyde 2,1-aminomutase 1 (428 aa).

The residue at position 267 (K267) is an N6-(pyridoxal phosphate)lysine.

It belongs to the class-III pyridoxal-phosphate-dependent aminotransferase family. HemL subfamily. In terms of assembly, homodimer. The cofactor is pyridoxal 5'-phosphate.

The protein resides in the cytoplasm. It carries out the reaction (S)-4-amino-5-oxopentanoate = 5-aminolevulinate. The protein operates within porphyrin-containing compound metabolism; protoporphyrin-IX biosynthesis; 5-aminolevulinate from L-glutamyl-tRNA(Glu): step 2/2. This is Glutamate-1-semialdehyde 2,1-aminomutase 1 from Staphylococcus aureus (strain MW2).